A 298-amino-acid polypeptide reads, in one-letter code: Lipoyl synthase (298 aa).

[4Fe-4S] cluster contacts are provided by Cys-40, Cys-45, Cys-51, Cys-67, Cys-71, Cys-74, and Ser-280. Residues 53 to 269 enclose the Radical SAM core domain; sequence AVRKTATFMI…KEIALSKGFS (217 aa).

This sequence belongs to the radical SAM superfamily. Lipoyl synthase family. [4Fe-4S] cluster serves as cofactor.

It is found in the cytoplasm. It catalyses the reaction [[Fe-S] cluster scaffold protein carrying a second [4Fe-4S](2+) cluster] + N(6)-octanoyl-L-lysyl-[protein] + 2 oxidized [2Fe-2S]-[ferredoxin] + 2 S-adenosyl-L-methionine + 4 H(+) = [[Fe-S] cluster scaffold protein] + N(6)-[(R)-dihydrolipoyl]-L-lysyl-[protein] + 4 Fe(3+) + 2 hydrogen sulfide + 2 5'-deoxyadenosine + 2 L-methionine + 2 reduced [2Fe-2S]-[ferredoxin]. The protein operates within protein modification; protein lipoylation via endogenous pathway; protein N(6)-(lipoyl)lysine from octanoyl-[acyl-carrier-protein]. Catalyzes the radical-mediated insertion of two sulfur atoms into the C-6 and C-8 positions of the octanoyl moiety bound to the lipoyl domains of lipoate-dependent enzymes, thereby converting the octanoylated domains into lipoylated derivatives. The protein is Lipoyl synthase of Bacillus anthracis (strain A0248).